The following is a 172-amino-acid chain: Myosin regulatory light chain 12B (172 aa).

Residues 1–16 (MSSKKAKTKTTKKRPQ) show a composition bias toward basic residues. Residues 1–20 (MSSKKAKTKTTKKRPQRATS) form a disordered region. Thr19 carries the post-translational modification Phosphothreonine; by MLCK and ZIPK/DAPK3. Ser20 is modified (phosphoserine; by MLCK and ZIPK/DAPK3). 3 EF-hand domains span residues 29–64 (SQIQEFKEAFNMIDQNRDGFIDKEDLHDMLASLGKN), 98–133 (DPEDVIRNAFACFDEEATGTIQEDYLRELLTTMGDR), and 134–169 (FTDEEVDELYREAPIDKKGNFNYIEFTRILKHGAKD). 4 residues coordinate Ca(2+): Asp42, Asn44, Asp46, and Asp53.

As to quaternary structure, myosin is a hexamer of 2 heavy chains and 4 light chains: interacts with myosin heavy chain MYO19. In terms of processing, phosphorylation increases the actin-activated myosin ATPase activity and thereby regulates the contractile activity. It is required to generate the driving force in the migration of the cells but not necessary for localization of myosin-2 at the leading edge. Phosphorylation is reduced following epigallocatechin-3-O-gallate treatment.

Its function is as follows. Myosin regulatory subunit that plays an important role in regulation of both smooth muscle and nonmuscle cell contractile activity via its phosphorylation. Phosphorylation triggers actin polymerization in vascular smooth muscle. Implicated in cytokinesis, receptor capping, and cell locomotion. The polypeptide is Myosin regulatory light chain 12B (Myl12b) (Rattus norvegicus (Rat)).